The following is a 497-amino-acid chain: Glycerol kinase (497 aa).

T12 lines the ADP pocket. Residues T12, T13, and S14 each coordinate ATP. T12 serves as a coordination point for sn-glycerol 3-phosphate. R16 lines the ADP pocket. Positions 82, 83, 134, and 243 each coordinate sn-glycerol 3-phosphate. Glycerol is bound by residues R82, E83, Y134, D243, and Q244. Residues T265 and G308 each coordinate ADP. 4 residues coordinate ATP: T265, G308, Q312, and G411. Residue G411 participates in ADP binding.

It belongs to the FGGY kinase family.

The enzyme catalyses glycerol + ATP = sn-glycerol 3-phosphate + ADP + H(+). The protein operates within polyol metabolism; glycerol degradation via glycerol kinase pathway; sn-glycerol 3-phosphate from glycerol: step 1/1. With respect to regulation, inhibited by fructose 1,6-bisphosphate (FBP). In terms of biological role, key enzyme in the regulation of glycerol uptake and metabolism. Catalyzes the phosphorylation of glycerol to yield sn-glycerol 3-phosphate. This Allorhizobium ampelinum (strain ATCC BAA-846 / DSM 112012 / S4) (Agrobacterium vitis (strain S4)) protein is Glycerol kinase.